Reading from the N-terminus, the 461-residue chain is MQRVNMIMAESPGLITICLLGYLLSAECTVFLDHENANKILNRPKRYNSGKLEEFVQGNLERECMEEKCSFEEAREVFENTERTTEFWKQYVDGDQCESNPCLNGGSCKDDINSYECWCPFGFEGKNCELDVTCNIKNGRCEQFCKNSADNKVVCSCTEGYRLAENQKSCEPAVPFPCGRVSVSQTSKLTRAETVFPDVDYVNSTEAETILDNITQSTQSFNDFTRVVGGEDAKPGQFPWQVVLNGKVDAFCGGSIVNEKWIVTAAHCVDTGVKITVVAGEHNIEETEHTEQKRNVIRIIPHHNYNAAINKYNHDIALLELDEPLVLNSYVTPICIADKEYTNIFLKFGSGYVSGWGRVFHKGRSALVLQYLRVPLVDRATCLRSTKFTIYNNMFCAGFHEGGRDSCQGDSGGPHVTEVEGTSFLTGIISWGEECAMKGKYGIYTKVSRYVNWIKEKTKLT.

Positions 1 to 28 (MQRVNMIMAESPGLITICLLGYLLSAEC) are cleaved as a signal peptide. Residues 29–46 (TVFLDHENANKILNRPKR) constitute a propeptide that is removed on maturation. Positions 47, 48, 53, 54, 61, 63, 66, 67, 72, 73, and 76 each coordinate Ca(2+). A Gla domain is found at 47–92 (YNSGKLEEFVQGNLERECMEEKCSFEEAREVFENTERTTEFWKQYV). A 4-carboxyglutamate mark is found at glutamate 53, glutamate 54, glutamate 61, glutamate 63, glutamate 66, glutamate 67, glutamate 72, glutamate 73, glutamate 76, glutamate 79, and glutamate 82. A Mg(2+)-binding site is contributed by glutamate 61. Cysteines 64 and 69 form a disulfide. Glutamate 66 is a Mg(2+) binding site. Position 72 (glutamate 72) interacts with Mg(2+). A Mg(2+)-binding site is contributed by glutamate 76. Glutamate 82 contributes to the Ca(2+) binding site. Glutamate 82 serves as a coordination point for Mg(2+). Threonine 85 is a glycosylation site (O-linked (GalNAc...) threonine). Positions 86, 93, 94, and 96 each coordinate Ca(2+). Position 86 is a 4-carboxyglutamate (glutamate 86). Mg(2+) is bound at residue glutamate 86. Residues 93-129 (DGDQCESNPCLNGGSCKDDINSYECWCPFGFEGKNCE) enclose the EGF-like 1; calcium-binding domain. 10 disulfides stabilise this stretch: cysteine 97–cysteine 108, cysteine 102–cysteine 117, cysteine 119–cysteine 128, cysteine 134–cysteine 145, cysteine 141–cysteine 155, cysteine 157–cysteine 170, cysteine 178–cysteine 335, cysteine 252–cysteine 268, cysteine 382–cysteine 396, and cysteine 407–cysteine 435. Residue serine 99 is glycosylated (O-linked (Glc...) serine). A glycan (O-linked (Fuc...) serine) is linked at serine 107. Aspartate 110 and aspartate 111 together coordinate Ca(2+). Aspartate 110 carries the (3R)-3-hydroxyaspartate modification. Position 114 is a phosphoserine (serine 114). The 42-residue stretch at 130 to 171 (LDVTCNIKNGRCEQFCKNSADNKVVCSCTEGYRLAENQKSCE) folds into the EGF-like 2 domain. Positions 192 to 226 (AETVFPDVDYVNSTEAETILDNITQSTQSFNDFTR) are cleaved as a propeptide — activation peptide. Residue tyrosine 201 is modified to Sulfotyrosine. Phosphoserine is present on serine 204. Threonine 205 carries the phosphothreonine; alternate modification. O-linked (GalNAc...) threonine; alternate glycosylation occurs at threonine 205. Asparagine 213 carries an N-linked (GlcNAc...) asparagine glycan. O-linked (GalNAc...) threonine glycosylation is found at threonine 215 and threonine 225. The 233-residue stretch at 227 to 459 (VVGGEDAKPG…YVNWIKEKTK (233 aa)) folds into the Peptidase S1 domain. Histidine 267 serves as the catalytic Charge relay system. Glutamate 281, asparagine 283, glutamate 286, glutamate 288, and glutamate 291 together coordinate Ca(2+). Catalysis depends on aspartate 315, which acts as the Charge relay system. The active-site Charge relay system is serine 411.

It belongs to the peptidase S1 family. Heterodimer of a light chain and a heavy chain; disulfide-linked. Interacts (inactive and activated) with F11 (activated) in calcium-dependent manner. Interacts with SERPINC1. Activated by factor XIa, which excises the activation peptide. The propeptide can also be removed by snake venom protease. In terms of processing, the iron and 2-oxoglutarate dependent 3-hydroxylation of aspartate and asparagine is (R) stereospecific within EGF domains. Activated by coagulation factor VIIa-tissue factor (F7-F3) complex in calcium-dependent manner. Post-translationally, predominantly O-glucosylated at Ser-99 by POGLUT1 in vitro.

Its subcellular location is the secreted. It carries out the reaction Selective cleavage of Arg-|-Ile bond in factor X to form factor Xa.. In terms of biological role, factor IX is a vitamin K-dependent plasma protein that participates in the intrinsic pathway of blood coagulation by converting factor X to its active form in the presence of Ca(2+) ions, phospholipids, and factor VIIIa. The protein is Coagulation factor IX (F9) of Pan troglodytes (Chimpanzee).